A 402-amino-acid chain; its full sequence is Imidazolonepropionase (402 aa).

The Fe(3+) site is built by His66 and His68. 2 residues coordinate Zn(2+): His66 and His68. The 4-imidazolone-5-propanoate site is built by Arg75, Tyr138, and His171. Tyr138 provides a ligand contact to N-formimidoyl-L-glutamate. His236 contributes to the Fe(3+) binding site. His236 serves as a coordination point for Zn(2+). Residue Gln239 coordinates 4-imidazolone-5-propanoate. Residue Asp311 coordinates Fe(3+). Asp311 is a binding site for Zn(2+). N-formimidoyl-L-glutamate contacts are provided by Asn313 and Gly315. 4-imidazolone-5-propanoate is bound at residue Thr316.

Belongs to the metallo-dependent hydrolases superfamily. HutI family. It depends on Zn(2+) as a cofactor. Fe(3+) serves as cofactor.

It localises to the cytoplasm. The enzyme catalyses 4-imidazolone-5-propanoate + H2O = N-formimidoyl-L-glutamate. It functions in the pathway amino-acid degradation; L-histidine degradation into L-glutamate; N-formimidoyl-L-glutamate from L-histidine: step 3/3. In terms of biological role, catalyzes the hydrolytic cleavage of the carbon-nitrogen bond in imidazolone-5-propanoate to yield N-formimidoyl-L-glutamate. It is the third step in the universal histidine degradation pathway. The polypeptide is Imidazolonepropionase (Pseudomonas aeruginosa (strain ATCC 15692 / DSM 22644 / CIP 104116 / JCM 14847 / LMG 12228 / 1C / PRS 101 / PAO1)).